The sequence spans 490 residues: Membrane-bound lytic murein transglycosylase F (490 aa).

The signal sequence occupies residues 1–32 (MFALTAYRLRCAAWLLATGIFLLLAGCSEAKA). The tract at residues 33 to 269 (PTALERVQKE…RLKDRYYGHV (237 aa)) is non-LT domain. Residues 270 to 490 (DVLGYVGAYT…PDDDEGDGKL (221 aa)) are LT domain. The active site involves glutamate 316. Residues 467-490 (AESGLHLPGVNKTRPDDDEGDGKL) form a disordered region.

It in the N-terminal section; belongs to the bacterial solute-binding protein 3 family. In the C-terminal section; belongs to the transglycosylase Slt family.

The protein resides in the cell outer membrane. It catalyses the reaction Exolytic cleavage of the (1-&gt;4)-beta-glycosidic linkage between N-acetylmuramic acid (MurNAc) and N-acetylglucosamine (GlcNAc) residues in peptidoglycan, from either the reducing or the non-reducing ends of the peptidoglycan chains, with concomitant formation of a 1,6-anhydrobond in the MurNAc residue.. In terms of biological role, murein-degrading enzyme that degrades murein glycan strands and insoluble, high-molecular weight murein sacculi, with the concomitant formation of a 1,6-anhydromuramoyl product. Lytic transglycosylases (LTs) play an integral role in the metabolism of the peptidoglycan (PG) sacculus. Their lytic action creates space within the PG sacculus to allow for its expansion as well as for the insertion of various structures such as secretion systems and flagella. The polypeptide is Membrane-bound lytic murein transglycosylase F (Pseudomonas paraeruginosa (strain DSM 24068 / PA7) (Pseudomonas aeruginosa (strain PA7))).